Reading from the N-terminus, the 535-residue chain is GMP synthase [glutamine-hydrolyzing] (535 aa).

One can recognise a Glutamine amidotransferase type-1 domain in the interval 21–211; that stretch reads LIVILDFGSQ…VYHICDCEPT (191 aa). C98 (nucleophile) is an active-site residue. Active-site residues include H185 and E187. The region spanning 212 to 410 is the GMPS ATP-PPase domain; it reads WTTAAFVEEA…LGLPEEIVQR (199 aa). ATP is bound at residue 239-245; the sequence is SGGVDSS.

As to quaternary structure, homodimer.

The enzyme catalyses XMP + L-glutamine + ATP + H2O = GMP + L-glutamate + AMP + diphosphate + 2 H(+). It functions in the pathway purine metabolism; GMP biosynthesis; GMP from XMP (L-Gln route): step 1/1. Catalyzes the synthesis of GMP from XMP. The protein is GMP synthase [glutamine-hydrolyzing] of Thermosynechococcus vestitus (strain NIES-2133 / IAM M-273 / BP-1).